Consider the following 217-residue polypeptide: tRNA (guanine-N(7)-)-methyltransferase (217 aa).

Residues Glu44, Glu69, Asp96, and Asp118 each coordinate S-adenosyl-L-methionine. Residue Asp118 is part of the active site. Substrate-binding positions include Lys122, Asp154, and 191 to 194 (TEYE).

The protein belongs to the class I-like SAM-binding methyltransferase superfamily. TrmB family.

The enzyme catalyses guanosine(46) in tRNA + S-adenosyl-L-methionine = N(7)-methylguanosine(46) in tRNA + S-adenosyl-L-homocysteine. The protein operates within tRNA modification; N(7)-methylguanine-tRNA biosynthesis. Functionally, catalyzes the formation of N(7)-methylguanine at position 46 (m7G46) in tRNA. The polypeptide is tRNA (guanine-N(7)-)-methyltransferase (Bacillus cytotoxicus (strain DSM 22905 / CIP 110041 / 391-98 / NVH 391-98)).